We begin with the raw amino-acid sequence, 553 residues long: Phenylalanine--tRNA ligase beta subunit (553 aa).

A B5 domain is found at 273 to 349 (FNVRNIDIEV…RAFGYNNITP (77 aa)). Mg(2+)-binding residues include Asp327, Asp333, Asp336, and Asp337.

It belongs to the phenylalanyl-tRNA synthetase beta subunit family. Type 2 subfamily. Tetramer of two alpha and two beta subunits. Mg(2+) serves as cofactor.

It localises to the cytoplasm. It catalyses the reaction tRNA(Phe) + L-phenylalanine + ATP = L-phenylalanyl-tRNA(Phe) + AMP + diphosphate + H(+). In Methanocella arvoryzae (strain DSM 22066 / NBRC 105507 / MRE50), this protein is Phenylalanine--tRNA ligase beta subunit.